Consider the following 342-residue polypeptide: tRNA N6-adenosine threonylcarbamoyltransferase (342 aa).

2 residues coordinate Fe cation: H111 and H115. Substrate contacts are provided by residues 133–137 (VVSGG), D166, G179, D183, and N273. A Fe cation-binding site is contributed by D301.

This sequence belongs to the KAE1 / TsaD family. Requires Fe(2+) as cofactor.

It localises to the cytoplasm. The enzyme catalyses L-threonylcarbamoyladenylate + adenosine(37) in tRNA = N(6)-L-threonylcarbamoyladenosine(37) in tRNA + AMP + H(+). Functionally, required for the formation of a threonylcarbamoyl group on adenosine at position 37 (t(6)A37) in tRNAs that read codons beginning with adenine. Is involved in the transfer of the threonylcarbamoyl moiety of threonylcarbamoyl-AMP (TC-AMP) to the N6 group of A37, together with TsaE and TsaB. TsaD likely plays a direct catalytic role in this reaction. The sequence is that of tRNA N6-adenosine threonylcarbamoyltransferase from Trichlorobacter lovleyi (strain ATCC BAA-1151 / DSM 17278 / SZ) (Geobacter lovleyi).